Reading from the N-terminus, the 192-residue chain is Leucine-rich repeat-containing protein 51 (192 aa).

LRR repeat units follow at residues 49 to 71, 80 to 101, and 103 to 124; these read SLTQ…NQVV, NLAW…LTTF, and NLSV…NKLA. The LRRCT domain occupies 137–175; sequence NPIEEEKGYRQYVLCNLPRITTFDFSGVTRADRSTAEVW.

Widely expressed in adult and embryonic tissues. Expressed in the developing choroid plexus from 12.5 dpc and in the epithelium of the developing airway tract from 14.5 dpc. Also expressed in the postnatal inner ear.

It localises to the cytoplasm. The polypeptide is Leucine-rich repeat-containing protein 51 (Mus musculus (Mouse)).